We begin with the raw amino-acid sequence, 415 residues long: 3-isopropylmalate dehydratase large subunit (415 aa).

The [4Fe-4S] cluster site is built by C297, C355, and C358.

Belongs to the aconitase/IPM isomerase family. LeuC type 2 subfamily. In terms of assembly, heterodimer of LeuC and LeuD. The cofactor is [4Fe-4S] cluster.

It carries out the reaction (2R,3S)-3-isopropylmalate = (2S)-2-isopropylmalate. Its pathway is amino-acid biosynthesis; L-leucine biosynthesis; L-leucine from 3-methyl-2-oxobutanoate: step 2/4. Functionally, catalyzes the isomerization between 2-isopropylmalate and 3-isopropylmalate, via the formation of 2-isopropylmaleate. This Caldivirga maquilingensis (strain ATCC 700844 / DSM 13496 / JCM 10307 / IC-167) protein is 3-isopropylmalate dehydratase large subunit.